The primary structure comprises 351 residues: Histidine protein kinase SaeS (351 aa).

Helical transmembrane passes span 9–29 and 40–60; these read IIIG…IAYI and TLTL…SIFI. Residues 61-114 enclose the HAMP domain; that stretch reads NPLIQKIKQFNIKTKQFANGNYASNDKTFNSPKEIYELNQSFNKMASEITQQMN. The 220-residue stretch at 129–348 folds into the Histidine kinase domain; it reads NLAHDLKTPL…TMTVTLHKLD (220 aa). The residue at position 132 (histidine 132) is a Phosphohistidine; by autocatalysis.

Post-translationally, autophosphorylated.

The protein resides in the cell membrane. It catalyses the reaction ATP + protein L-histidine = ADP + protein N-phospho-L-histidine.. Functionally, member of the two-component regulatory system SaeR/SaeS involved in the regulation of staphylococcal virulence factors in a strain-dependent fashion. Probably functions as a membrane-associated protein kinase that upon sensing the appropriate signal, autophosphorylates and in turn activates the cytosolic response regulator SaeR. This Staphylococcus aureus (strain bovine RF122 / ET3-1) protein is Histidine protein kinase SaeS (saeS).